A 616-amino-acid polypeptide reads, in one-letter code: Membrane protein insertase YidC (616 aa).

Residues 8–28 traverse the membrane as a helical segment; sequence MFVAIALSLVVLLGWHYFVTG. The tract at residues 33-85 is disordered; it reads RQRQAAQSQTAQTGAPQTADGIPSPSPREGGPNAPAPGTLPGAAAQGPVSRED. 2 stretches are compositionally biased toward low complexity: residues 36–51 and 62–80; these read QAAQSQTAQTGAPQTA and GGPNAPAPGTLPGAAAQGP. 4 helical membrane passes run 386-406, 460-480, 516-536, and 551-571; these read LLGNFGVSILLVTLILKLFFL, WPVLIQIPVFFALYKVLFITI, YIPIHLGVWPIIMGITMFIQM, and FAFMPIVFTFMLGSFPAGLVI.

This sequence belongs to the OXA1/ALB3/YidC family. Type 1 subfamily. In terms of assembly, interacts with the Sec translocase complex via SecD. Specifically interacts with transmembrane segments of nascent integral membrane proteins during membrane integration.

Its subcellular location is the cell inner membrane. Required for the insertion and/or proper folding and/or complex formation of integral membrane proteins into the membrane. Involved in integration of membrane proteins that insert both dependently and independently of the Sec translocase complex, as well as at least some lipoproteins. Aids folding of multispanning membrane proteins. The chain is Membrane protein insertase YidC from Methylorubrum extorquens (strain PA1) (Methylobacterium extorquens).